The following is a 340-amino-acid chain: Uroporphyrinogen decarboxylase (340 aa).

Substrate-binding positions include arginine 21–arginine 25, aspartate 71, tyrosine 148, serine 203, and histidine 316.

The protein belongs to the uroporphyrinogen decarboxylase family. In terms of assembly, homodimer.

It is found in the cytoplasm. It catalyses the reaction uroporphyrinogen III + 4 H(+) = coproporphyrinogen III + 4 CO2. It participates in porphyrin-containing compound metabolism; protoporphyrin-IX biosynthesis; coproporphyrinogen-III from 5-aminolevulinate: step 4/4. Its function is as follows. Catalyzes the decarboxylation of four acetate groups of uroporphyrinogen-III to yield coproporphyrinogen-III. This Campylobacter jejuni subsp. jejuni serotype O:6 (strain 81116 / NCTC 11828) protein is Uroporphyrinogen decarboxylase.